Reading from the N-terminus, the 422-residue chain is MGNWNKYIPKGMKDILFEESNIKLDIEDQLRKIYKYSGFSEIISPTIEFYDVFNSNIQAIPQEKMYKLFDNLGRILVLRPDMTTPIGRITGTKMKDCTYPLKLCYTANIFRVNEKLNGKRGEITQSGIEIIGTKGIKSDVDSIVTAINALLSLGLRNFKIELGEAGLFEALTENMRIEEENLKKLKEIIRNKNYVALKKFLDEISLKYSKEDFEIIENLPKLFGDIEIIEKAKALTKNEKALKSLNDIYNIYKSIEDIGLGSYISIDLGMVQNIDYYTGVIFKGYVEEVGDSILSGGRYDNLIQHFGIELPATGFAINVDDIMIALKKQNTMSMDKDKKVLIFYKEEFLRKAYDFMQELKMKKIICELSLLDEDKEILLYSKKKGIDFIIGFTREEKLFVKDLKSDKIAFLEKNEIEDLLMV.

This sequence belongs to the class-II aminoacyl-tRNA synthetase family. HisZ subfamily. As to quaternary structure, heteromultimer composed of HisG and HisZ subunits.

Its subcellular location is the cytoplasm. It functions in the pathway amino-acid biosynthesis; L-histidine biosynthesis; L-histidine from 5-phospho-alpha-D-ribose 1-diphosphate: step 1/9. In terms of biological role, required for the first step of histidine biosynthesis. May allow the feedback regulation of ATP phosphoribosyltransferase activity by histidine. This Clostridium botulinum (strain 657 / Type Ba4) protein is ATP phosphoribosyltransferase regulatory subunit.